A 695-amino-acid polypeptide reads, in one-letter code: MAEAPPRRLGLGPPPGDAPRAELVALTAVQSEQGEAGGGGSPRRLGLLGSPLPPGAPLPGPGSGSGSACGQRSSAAHKRYRRLQNWVYNVLERPRGWAFVYHVFIFLLVFSCLVLSVLSTIQEHQELANECLLILEFVMIVVFGLEYIIRVWSAGCCCRYRGWQGRFRFARKPFCVIDFIVFVASVAVIAAGTQGNIFATSALRSMRFLQILRMVRMDRRGGTWKLLGSVVYAHSKELITAWYIGFLVLIFASFLVYLAEKDANSDFSSYADSLWWGTITLTTIGYGDKTPHTWLGRVLAAGFALLGISFFALPAGILGSGFALKVQEQHRQKHFEKRRMPAANLIQAAWRLYSTDTSRAYLTATWYYYDSILPSFRELALLFEHIQRARNGGLRPLEVRRAPVPDGAASRYPPVATCHRPGSASFCPGESSRMGIKDRIRMSSSQKRTGPSKQHLAPPPIPTSPSSEQVGEASSPSKVQKSWSFNDRTRFRASLRLKPRCSTEEGPSEEVAEEKSYQCELTVDDVMPTVKTVIRSVRILKFLVAKRKFKETLRPYDVKDVIEQYSAGHLDMLGRIKSLQARVDQIVGRGPGDRKTREKGDKGPSDTEAVDEISMMGRVVKVEKQVQSIEHKLDLLLGFYSRCLRSGTSASLGTVQVPLFDPDITSDYHSPVDHEDISVSAQTLSISRSVSTNMD.

The interval 1–21 (MAEAPPRRLGLGPPPGDAPRA) is disordered. Topologically, residues 1 to 96 (MAEAPPRRLG…VYNVLERPRG (96 aa)) are cytoplasmic. Arg-93 provides a ligand contact to a 1,2-diacyl-sn-glycero-3-phospho-(1D-myo-inositol-4,5-bisphosphate). The chain crosses the membrane as a helical span at residues 97 to 118 (WAFVYHVFIFLLVFSCLVLSVL). Residues 119–129 (STIQEHQELAN) are Extracellular-facing. A helical membrane pass occupies residues 130–152 (ECLLILEFVMIVVFGLEYIIRVW). The Cytoplasmic segment spans residues 153–168 (SAGCCCRYRGWQGRFR). A helical transmembrane segment spans residues 169-191 (FARKPFCVIDFIVFVASVAVIAA). Lys-172 serves as a coordination point for a 1,2-diacyl-sn-glycero-3-phospho-(1D-myo-inositol-4,5-bisphosphate). Topologically, residues 192 to 202 (GTQGNIFATSA) are extracellular. Residues 203–223 (LRSMRFLQILRMVRMDRRGGT) traverse the membrane as a helical; Voltage-sensor segment. Residues Arg-219, Arg-220, Lys-225, and Ser-235 each coordinate a 1,2-diacyl-sn-glycero-3-phospho-(1D-myo-inositol-4,5-bisphosphate). At 224-235 (WKLLGSVVYAHS) the chain is on the cytoplasmic side. The chain crosses the membrane as a helical span at residues 236–258 (KELITAWYIGFLVLIFASFLVYL). The Extracellular segment spans residues 259-270 (AEKDANSDFSSY). The segment at residues 271 to 292 (ADSLWWGTITLTTIGYGDKTPH) is an intramembrane region (pore-forming). Position 293 (Thr-293) is a topological domain, extracellular. The chain crosses the membrane as a helical span at residues 294–322 (WLGRVLAAGFALLGISFFALPAGILGSGF). Residues 323–695 (ALKVQEQHRQ…ISRSVSTNMD (373 aa)) lie on the Cytoplasmic side of the membrane. A 1,2-diacyl-sn-glycero-3-phospho-(1D-myo-inositol-4,5-bisphosphate) contacts are provided by His-330 and Lys-333. The interval 342–351 (AANLIQAAWR) is interaction with CALM. The segment at 441-483 (RMSSSQKRTGPSKQHLAPPPIPTSPSSEQVGEASSPSKVQKSW) is disordered. Polar residues-rich tracts occupy residues 442 to 452 (MSSSQKRTGPS) and 464 to 483 (SPSS…QKSW). Residues 535-549 (RSVRILKFLVAKRKF) are interaction with CALM. A C-terminal assembly domain (tetramerization) region spans residues 546–650 (KRKFKETLRP…SRCLRSGTSA (105 aa)). The interval 588-608 (GRGPGDRKTREKGDKGPSDTE) is disordered. The segment covering 591 to 605 (PGDRKTREKGDKGPS) has biased composition (basic and acidic residues).

It belongs to the potassium channel family. KQT (TC 1.A.1.15) subfamily. Kv7.4/KCNQ4 sub-subfamily. In terms of assembly, homotetramer. Interacts (via C-terminus) with calmodulin; forms a heterooctameric structure (with 4:4 KCNQ1:CALM stoichiometry); the interaction is calcium-independent, constitutive, participates in the proper assembly of a functional channel. The interaction with calcium-free CALM controls channel trafficking whereas interaction with calcium-bound CALM regulates channel gating. May form a functional heteromultimeric channel with KCNQ3. Interacts with HSP90AB1; promotes cell surface expression of KCNQ4. Expressed in both the inner (IHCs) and the outer hair cells (OHCs) of the cochlea. Reciprocal longitudinal gradients of expression is present in IHCs and OHCs. The strongest expression in IHCs is in the base of the cochlea and in the apex for OHCs. A basal to apical gradient of expression is also present in both type I and type II spiral ganglion cells.

It is found in the basal cell membrane. The catalysed reaction is K(+)(in) = K(+)(out). Its activity is regulated as follows. Two molecules of phosphatidylinositol-4,5-bisphosphate (PIP2-I and PIP2-II) are essential to activate KCNQ4 channel by inducing the coupling of the voltage-sensing domain (VSD) and the pore-forming domain (PD). Upon channel activation, PIP2-I and PIP2-II disrupt the VSD-calmodulin/CALM interaction, causing the release of CALM from the VSD which triggers the opening of the gate. Calcium suppresses KCNQ4 channel current through calcium-bound CALM C-terminus. Therefore CALM acts as calcium sensor that controls channel activity. In terms of biological role, pore-forming subunit of the voltage-gated potassium (Kv) channel involved in the regulation of sensory cells excitability in the cochlea. KCNQ4/Kv7.4 channel is composed of 4 pore-forming subunits assembled as tetramers. Promotes the outflow of potassium ions in the repolarization phase of action potential which plays a role in regulating membrane potential of excitable cells. The channel conducts a slowly activating and deactivating current. Current often shows some inward rectification at positive potentials. Channel may be selectively permeable in vitro to other cations besides potassium, in decreasing order of affinity K(+) = Rb(+) &gt; Cs(+) &gt; Na(+). Important for normal physiological function of inner ear such as sensory perception of sound. This Rattus norvegicus (Rat) protein is Potassium voltage-gated channel subfamily KQT member 4.